Reading from the N-terminus, the 101-residue chain is Small integral membrane protein 21 (101 aa).

A helical transmembrane segment spans residues 49 to 65; sequence HIRFFTLLVLFHVMVLL.

Its subcellular location is the membrane. The chain is Small integral membrane protein 21 (SMIM21) from Homo sapiens (Human).